The primary structure comprises 143 residues: Large-conductance mechanosensitive channel (143 aa).

3 helical membrane passes run 10-30 (FAVK…GAFG), 40-60 (VIMP…LFLV), and 86-106 (GSFI…FMMV).

Belongs to the MscL family. Homopentamer.

The protein resides in the cell inner membrane. Its function is as follows. Channel that opens in response to stretch forces in the membrane lipid bilayer. May participate in the regulation of osmotic pressure changes within the cell. The chain is Large-conductance mechanosensitive channel from Paracidovorax citrulli (strain AAC00-1) (Acidovorax citrulli).